Consider the following 139-residue polypeptide: ATP synthase epsilon chain (139 aa).

The tract at residues 89-110 (EARAEQARAEAEARRREAQSEH) is disordered.

This sequence belongs to the ATPase epsilon chain family. In terms of assembly, F-type ATPases have 2 components, CF(1) - the catalytic core - and CF(0) - the membrane proton channel. CF(1) has five subunits: alpha(3), beta(3), gamma(1), delta(1), epsilon(1). CF(0) has three main subunits: a, b and c.

The protein resides in the cell membrane. Produces ATP from ADP in the presence of a proton gradient across the membrane. The chain is ATP synthase epsilon chain from Chloroflexus aggregans (strain MD-66 / DSM 9485).